Consider the following 269-residue polypeptide: Voltage-gated hydrogen channel 1 (269 aa).

The Cytoplasmic portion of the chain corresponds to 1–96 (MTSHDPKAVT…RLRKLFSSHR (96 aa)). The residue at position 29 (Thr-29) is a Phosphothreonine. Positions 46 to 79 (ENEEEEEEPAPTSAEGEGNAEGPDAEAGSASTPR) are disordered. A Phosphoserine modification is found at Ser-93. Residues 97–117 (FQVIIICLVVLDALLVLAELL) form a helical membrane-spanning segment. The Extracellular segment spans residues 118-134 (LDLKIIEPDEQDYAVTA). The chain crosses the membrane as a helical span at residues 135 to 157 (FHYMSFAILVFFMLEIFFKIFVF). Over 158-165 (RLEFFHHK) the chain is Cytoplasmic. Residues 166–186 (FEILDAFVVVVSFVLDLVLLF) form a helical membrane-spanning segment. Residues 187–193 (KSHHFEA) are Extracellular-facing. A helical membrane pass occupies residues 194 to 214 (LGLLILLRLWRVARIINGIII). Topologically, residues 215–269 (SVKTRSERQILRLKQINIQLATKIQHLEFSCSEKEQEIERLNKLLKQNGLLGDVN) are cytoplasmic. Positions 221-261 (ERQILRLKQINIQLATKIQHLEFSCSEKEQEIERLNKLLKQ) form a coiled coil.

It belongs to the voltage-gated proton channel (VPC) (TC 1.A.51) family. As to quaternary structure, homodimer; each protomer forms its own proton conduction pathway. In terms of processing, phosphorylated in vitro by PRKCD. Phosphorylation may enhance channel gating. In terms of tissue distribution, enriched in immune tissues, such as bone marrow, macrophages and spleen.

The protein resides in the cell membrane. Its subcellular location is the apical cell membrane. The protein localises to the cytoplasmic vesicle. It localises to the phagosome membrane. It is found in the cell projection. The protein resides in the cilium. Its subcellular location is the flagellum membrane. The catalysed reaction is H(+)(in) = H(+)(out). With respect to regulation, the dimers display cooperative channel gating. The channel activity is inhibited by zinc ions. Its function is as follows. Voltage-gated proton-selective channel that conducts outward proton currents in response to intracellular acidification. Lacks a canonical ion-channel pore domain and mediates proton permeability via its voltage sensor domain. Provides for proton efflux that compensates for electron charge generated by NADPH oxidase activity either in the extracellular or phagosomal compartments, thus enabling the production of high levels of bactericidal reactive oxygen species during the respiratory burst. Opens when the pH of airway surface liquid exceeds 7 and contributes to respiratory epithelial acid secretion to maintain pH in the mucosa. This is Voltage-gated hydrogen channel 1 from Mus musculus (Mouse).